Here is a 283-residue protein sequence, read N- to C-terminus: Tryptophan 2,3-dioxygenase (283 aa).

Substrate is bound by residues 52 to 56 (FIIQH), Y114, and R118. A heme-binding site is contributed by H241. T255 is a substrate binding site.

This sequence belongs to the tryptophan 2,3-dioxygenase family. Homotetramer. Heme is required as a cofactor.

It carries out the reaction L-tryptophan + O2 = N-formyl-L-kynurenine. The protein operates within amino-acid degradation; L-tryptophan degradation via kynurenine pathway; L-kynurenine from L-tryptophan: step 1/2. Its function is as follows. Heme-dependent dioxygenase that catalyzes the oxidative cleavage of the L-tryptophan (L-Trp) pyrrole ring and converts L-tryptophan to N-formyl-L-kynurenine. Catalyzes the oxidative cleavage of the indole moiety. In Pseudomonas fluorescens (strain ATCC BAA-477 / NRRL B-23932 / Pf-5), this protein is Tryptophan 2,3-dioxygenase.